Here is an 87-residue protein sequence, read N- to C-terminus: Antitoxin RelB1 (87 aa).

Antitoxin component of a type II toxin-antitoxin (TA) system. Neutralizes the effect of cognate toxin RelE1, but no other RelE or ParE toxin. The polypeptide is Antitoxin RelB1 (relB1) (Caulobacter vibrioides (strain ATCC 19089 / CIP 103742 / CB 15) (Caulobacter crescentus)).